Reading from the N-terminus, the 506-residue chain is MSFSVEVLAGIAIELQRGIGHQDRFQRLITTLRQVLACDASALLRYESRQFIPLAIDGLAQDVLGRRFTLEGHPRLEAIARAGDVVRFPADSDLPDPYDGLIPGQESLKVHACVGLPLFAGQNLIGALTLDAMTPEQFEVFSDEELRLVAALAAGALSNALLIEQLESQNMLPGSSGVFEPIKETHMIGLSPAMTQLKKEIEIVAGSDLNVLIGGETGTGKELVAKAIHQGSPRAVNPLVYLNCAALPESVAESELFGHVKGAFTGAISNRSGKFEMADNGTLFLDEIGELSLALQAKLLRVLQYGDIQRVGDDRSLRVDVRVLAATNRDLREEVLAGRFRADLFHRLSVFPLFVPPLRERGDDVVLLAGYFCEQCRLRLGLSRVVLSPGARRHLLNYGWPGNVRELEHAIHRAVVLARATRAGDEVILEAQHFALSEDVLPAPPAESFLALPTCRNLRESTENFQREMIRQALAQNNHNWAASARALETDVANLHRLAKRLGLKD.

Position 57 is a 4-aspartylphosphate (Asp57). One can recognise a Sigma-54 factor interaction domain in the interval 187–416 (MIGLSPAMTQ…LEHAIHRAVV (230 aa)). ATP is bound by residues 215-222 (GETGTGKE) and 278-287 (ADNGTLFLDE). The H-T-H motif DNA-binding region spans 481 to 500 (WAASARALETDVANLHRLAK).

The protein operates within nitrogen metabolism; nitric oxide reduction. Required for the expression of anaerobic nitric oxide (NO) reductase, acts as a transcriptional activator for at least the norVW operon. Activation also requires sigma-54. The sequence is that of Anaerobic nitric oxide reductase transcription regulator NorR from Salmonella schwarzengrund (strain CVM19633).